Consider the following 256-residue polypeptide: Undecaprenyl-diphosphatase 2 (256 aa).

Helical transmembrane passes span 1–21 (MDIFNAIILGIIEGITEFLPI), 38–58 (ATATNQAFGVIIQLAAILAVL), 70–90 (LNLWIKVAIAFIPLGIIAFIF), 97–117 (LFNVPVVGVMFIVGGVIFLLL), 134–154 (VTYKQAIWIGIAQVFALIPGT), 175–195 (AEFSFLLGLPVLAAASGYDLL), 208–228 (ALAVGFVTSFIVAYFTIKLFI), and 236–256 (FVSFGIYRIVFGVILLTIAYV).

It belongs to the UppP family.

It localises to the cell inner membrane. It carries out the reaction di-trans,octa-cis-undecaprenyl diphosphate + H2O = di-trans,octa-cis-undecaprenyl phosphate + phosphate + H(+). Functionally, catalyzes the dephosphorylation of undecaprenyl diphosphate (UPP). Confers resistance to bacitracin. This Pseudoalteromonas translucida (strain TAC 125) protein is Undecaprenyl-diphosphatase 2.